Reading from the N-terminus, the 261-residue chain is Thiamine thiazole synthase (261 aa).

Residues Ser40, 59–60, Gly67, Val133, and 159–161 each bind NAD(+); these read ER and HVD. Fe cation-binding residues include Asp161 and His176. Residues Ser179 and Met226 each coordinate NAD(+). Arg236 serves as a coordination point for glycine.

The protein belongs to the THI4 family. In terms of assembly, homooctamer; tetramer of dimers. The cofactor is Fe(2+).

It catalyses the reaction hydrogen sulfide + glycine + NAD(+) = ADP-5-ethyl-4-methylthiazole-2-carboxylate + nicotinamide + 3 H2O + H(+). The protein operates within cofactor biosynthesis; thiamine diphosphate biosynthesis. Involved in the biosynthesis of the thiazole moiety of thiamine. Catalyzes the conversion of NAD and glycine to adenosine diphosphate 5-(2-hydroxyethyl)-4-methylthiazole-2-carboxylate (ADT), an adenylated thiazole intermediate, using free sulfide as a source of sulfur. The protein is Thiamine thiazole synthase of Methanococcus vannielii (strain ATCC 35089 / DSM 1224 / JCM 13029 / OCM 148 / SB).